Reading from the N-terminus, the 51-residue chain is Protein I177L (51 aa).

Asn-11 carries N-linked (GlcNAc...) asparagine; by host glycosylation.

This sequence belongs to the asfivirus I177L family.

It is found in the virion. In Ornithodoros (relapsing fever ticks), this protein is Protein I177L.